Reading from the N-terminus, the 397-residue chain is UDP-GlcNAc:betaGal beta-1,3-N-acetylglucosaminyltransferase 7 (397 aa).

Topologically, residues 1 to 6 (MSLWKK) are cytoplasmic. A helical membrane pass occupies residues 7–26 (TLYKSVCLALALLVAVTVFQ). Topologically, residues 27–397 (RSVTPGQFLQ…LTCSVKFQVL (371 aa)) are lumenal. 4 N-linked (GlcNAc...) asparagine glycosylation sites follow: asparagine 84, asparagine 90, asparagine 210, and asparagine 387.

The protein belongs to the glycosyltransferase 31 family. In terms of tissue distribution, strongly expressed in placenta and colon. Moderately expressed in lung, stomach, small intestine and kidney. Very weakly expressed in cerebrum, cerebellum, heart and testis.

It is found in the golgi apparatus membrane. The protein operates within protein modification; protein glycosylation. N-acetyl glucosamine (GlcNAc) transferase that catalyzes the transfer of GlcNAc via a beta1-&gt;3 linkage from UDP-GlcNAc to the non-reducing terminal galactose (Gal) in the linearly growing chain of N- and O-linked keratan sulfate proteoglycans. Cooperates with B4GALT4 galactosyltransferase and CHST6 and CHST1 sulfotransferases to construct and elongate mono- and disulfated disaccharide units [-&gt;3Galbeta1-&gt;4(6-sulfoGlcNAcbeta)1-&gt;] and [-&gt;3(6-sulfoGalbeta)1-&gt;4(6-sulfoGlcNAcbeta)1-&gt;] within keratan sulfate polymer. Involved in biosynthesis of N-linked keratan sulfate proteoglycans in cornea, with an impact on proteoglycan fibril organization and corneal transparency. May play a role in the maintenance of tissue architecture by suppressing cellular motility and invasion. The chain is UDP-GlcNAc:betaGal beta-1,3-N-acetylglucosaminyltransferase 7 (B3gnt7) from Mus musculus (Mouse).